A 465-amino-acid polypeptide reads, in one-letter code: Chromosomal replication initiator protein DnaA (465 aa).

A domain I, interacts with DnaA modulators region spans residues 1-84 (MSLSLWQQCL…RFEVGSKPLV (84 aa)). The segment at 84 to 128 (VQTISQPAQSHHNPVSVARQQPVRMAPVRPSWDNSPVQAEHTYRS) is domain II. The domain III, AAA+ region stretch occupies residues 129 to 345 (NVNPKHTFDN…GALNRVIANA (217 aa)). Residues Gly173, Gly175, Lys176, and Thr177 each coordinate ATP. The segment at 346 to 465 (NFTGRSITID…FSNLIRTLSS (120 aa)) is domain IV, binds dsDNA.

This sequence belongs to the DnaA family. As to quaternary structure, oligomerizes as a right-handed, spiral filament on DNA at oriC.

The protein resides in the cytoplasm. Plays an essential role in the initiation and regulation of chromosomal replication. ATP-DnaA binds to the origin of replication (oriC) to initiate formation of the DNA replication initiation complex once per cell cycle. Binds the DnaA box (a 9 base pair repeat at the origin) and separates the double-stranded (ds)DNA. Forms a right-handed helical filament on oriC DNA; dsDNA binds to the exterior of the filament while single-stranded (ss)DNA is stabiized in the filament's interior. The ATP-DnaA-oriC complex binds and stabilizes one strand of the AT-rich DNA unwinding element (DUE), permitting loading of DNA polymerase. After initiation quickly degrades to an ADP-DnaA complex that is not apt for DNA replication. Binds acidic phospholipids. The polypeptide is Chromosomal replication initiator protein DnaA (Pectobacterium atrosepticum (strain SCRI 1043 / ATCC BAA-672) (Erwinia carotovora subsp. atroseptica)).